The chain runs to 649 residues: Archaeal Lon protease (649 aa).

Over 1-114 (MFSIKFKTTE…KLDFKAPSST (114 aa)) the chain is Cytoplasmic. 47 to 54 (GDPGVGKS) is an ATP binding site. The chain crosses the membrane as a helical span at residues 115 to 135 (TLLLIMIGAILLSEYLLKYLP). The Extracellular segment spans residues 136–138 (QNY). Residues 139-159 (LLAAVTITALIVLIFGFVIIL) form a helical membrane-spanning segment. Topologically, residues 160–649 (TSIMGASRAS…DNRGGAERFN (490 aa)) are cytoplasmic. The 184-residue stretch at 456–639 (EPKVGVIYGL…DEIVPLVFDL (184 aa)) folds into the Lon proteolytic domain. Active-site residues include serine 550 and lysine 593.

Belongs to the peptidase S16 family. Archaeal LonB subfamily. As to quaternary structure, homohexamer. Organized in a ring with a central cavity.

Its subcellular location is the cell membrane. In terms of biological role, ATP-dependent serine protease that mediates the selective degradation of mutant and abnormal proteins as well as certain short-lived regulatory proteins. Degrades polypeptides processively. The chain is Archaeal Lon protease from Methanocaldococcus jannaschii (strain ATCC 43067 / DSM 2661 / JAL-1 / JCM 10045 / NBRC 100440) (Methanococcus jannaschii).